Consider the following 487-residue polypeptide: Proline--tRNA ligase (487 aa).

It belongs to the class-II aminoacyl-tRNA synthetase family. ProS type 3 subfamily. In terms of assembly, homodimer.

It is found in the cytoplasm. It catalyses the reaction tRNA(Pro) + L-proline + ATP = L-prolyl-tRNA(Pro) + AMP + diphosphate. In terms of biological role, catalyzes the attachment of proline to tRNA(Pro) in a two-step reaction: proline is first activated by ATP to form Pro-AMP and then transferred to the acceptor end of tRNA(Pro). The sequence is that of Proline--tRNA ligase from Pyrobaculum neutrophilum (strain DSM 2338 / JCM 9278 / NBRC 100436 / V24Sta) (Thermoproteus neutrophilus).